The primary structure comprises 235 residues: Leucyl/phenylalanyl-tRNA--protein transferase (235 aa).

Belongs to the L/F-transferase family.

It is found in the cytoplasm. The enzyme catalyses N-terminal L-lysyl-[protein] + L-leucyl-tRNA(Leu) = N-terminal L-leucyl-L-lysyl-[protein] + tRNA(Leu) + H(+). The catalysed reaction is N-terminal L-arginyl-[protein] + L-leucyl-tRNA(Leu) = N-terminal L-leucyl-L-arginyl-[protein] + tRNA(Leu) + H(+). It catalyses the reaction L-phenylalanyl-tRNA(Phe) + an N-terminal L-alpha-aminoacyl-[protein] = an N-terminal L-phenylalanyl-L-alpha-aminoacyl-[protein] + tRNA(Phe). Functionally, functions in the N-end rule pathway of protein degradation where it conjugates Leu, Phe and, less efficiently, Met from aminoacyl-tRNAs to the N-termini of proteins containing an N-terminal arginine or lysine. This chain is Leucyl/phenylalanyl-tRNA--protein transferase, found in Cellvibrio japonicus (strain Ueda107) (Pseudomonas fluorescens subsp. cellulosa).